Reading from the N-terminus, the 371-residue chain is Bifunctional enzyme IspD/IspF (371 aa).

A 2-C-methyl-D-erythritol 4-phosphate cytidylyltransferase region spans residues 1-210; that stretch reads MSEISLIMLA…LDLPTPSFEI (210 aa). A 2-C-methyl-D-erythritol 2,4-cyclodiphosphate synthase region spans residues 211–371; that stretch reads FTGNGFDVHE…NLKYFDWTRL (161 aa). Residues Asp217 and His219 each coordinate a divalent metal cation. 4-CDP-2-C-methyl-D-erythritol 2-phosphate-binding positions include 217–219 and 243–244; these read DVH and HS. A divalent metal cation is bound at residue His251. 4-CDP-2-C-methyl-D-erythritol 2-phosphate contacts are provided by residues 265–267, 270–274, 341–344, Phe348, and Arg351; these read DIG, YPDTD, and TTTE.

It in the N-terminal section; belongs to the IspD/TarI cytidylyltransferase family. IspD subfamily. The protein in the C-terminal section; belongs to the IspF family. It depends on a divalent metal cation as a cofactor.

The catalysed reaction is 2-C-methyl-D-erythritol 4-phosphate + CTP + H(+) = 4-CDP-2-C-methyl-D-erythritol + diphosphate. It catalyses the reaction 4-CDP-2-C-methyl-D-erythritol 2-phosphate = 2-C-methyl-D-erythritol 2,4-cyclic diphosphate + CMP. It participates in isoprenoid biosynthesis; isopentenyl diphosphate biosynthesis via DXP pathway; isopentenyl diphosphate from 1-deoxy-D-xylulose 5-phosphate: step 2/6. The protein operates within isoprenoid biosynthesis; isopentenyl diphosphate biosynthesis via DXP pathway; isopentenyl diphosphate from 1-deoxy-D-xylulose 5-phosphate: step 4/6. In terms of biological role, bifunctional enzyme that catalyzes the formation of 4-diphosphocytidyl-2-C-methyl-D-erythritol from CTP and 2-C-methyl-D-erythritol 4-phosphate (MEP) (IspD), and catalyzes the conversion of 4-diphosphocytidyl-2-C-methyl-D-erythritol 2-phosphate (CDP-ME2P) to 2-C-methyl-D-erythritol 2,4-cyclodiphosphate (ME-CPP) with a corresponding release of cytidine 5-monophosphate (CMP) (IspF). The polypeptide is Bifunctional enzyme IspD/IspF (Campylobacter jejuni subsp. jejuni serotype O:6 (strain 81116 / NCTC 11828)).